The following is a 209-amino-acid chain: Thymidylate kinase (209 aa).

7 to 14 (GVEGSGKS) contacts ATP.

Belongs to the thymidylate kinase family.

The enzyme catalyses dTMP + ATP = dTDP + ADP. Functionally, phosphorylation of dTMP to form dTDP in both de novo and salvage pathways of dTTP synthesis. The chain is Thymidylate kinase from Solidesulfovibrio magneticus (strain ATCC 700980 / DSM 13731 / RS-1) (Desulfovibrio magneticus).